An 89-amino-acid chain; its full sequence is Small ribosomal subunit protein uS15 (89 aa).

The protein belongs to the universal ribosomal protein uS15 family. As to quaternary structure, part of the 30S ribosomal subunit. Forms a bridge to the 50S subunit in the 70S ribosome, contacting the 23S rRNA.

In terms of biological role, one of the primary rRNA binding proteins, it binds directly to 16S rRNA where it helps nucleate assembly of the platform of the 30S subunit by binding and bridging several RNA helices of the 16S rRNA. Its function is as follows. Forms an intersubunit bridge (bridge B4) with the 23S rRNA of the 50S subunit in the ribosome. The chain is Small ribosomal subunit protein uS15 from Parafrankia sp. (strain EAN1pec).